Here is a 412-residue protein sequence, read N- to C-terminus: Putative competence-damage inducible protein (412 aa).

Belongs to the CinA family.

This is Putative competence-damage inducible protein from Bacillus cereus (strain ZK / E33L).